A 276-amino-acid chain; its full sequence is DNA repair protein RecO (276 aa).

The protein belongs to the RecO family.

In terms of biological role, involved in DNA repair and RecF pathway recombination. In Mycobacterium sp. (strain JLS), this protein is DNA repair protein RecO.